The primary structure comprises 660 residues: DNA ligase (660 aa).

NAD(+) contacts are provided by residues 33–37 (DFVYD), 82–83 (SL), and Glu110. Lys112 (N6-AMP-lysine intermediate) is an active-site residue. Residues Arg133, Glu167, Lys281, and Lys305 each contribute to the NAD(+) site. Cys396, Cys399, Cys412, and Cys417 together coordinate Zn(2+). Residues 583–660 (GENKLLAGKK…SFEDIKSYLD (78 aa)) form the BRCT domain.

The protein belongs to the NAD-dependent DNA ligase family. LigA subfamily. Mg(2+) is required as a cofactor. It depends on Mn(2+) as a cofactor.

It catalyses the reaction NAD(+) + (deoxyribonucleotide)n-3'-hydroxyl + 5'-phospho-(deoxyribonucleotide)m = (deoxyribonucleotide)n+m + AMP + beta-nicotinamide D-nucleotide.. Functionally, DNA ligase that catalyzes the formation of phosphodiester linkages between 5'-phosphoryl and 3'-hydroxyl groups in double-stranded DNA using NAD as a coenzyme and as the energy source for the reaction. It is essential for DNA replication and repair of damaged DNA. This Borreliella burgdorferi (strain ATCC 35210 / DSM 4680 / CIP 102532 / B31) (Borrelia burgdorferi) protein is DNA ligase.